The following is a 308-amino-acid chain: Protoheme IX farnesyltransferase (308 aa).

The next 8 helical transmembrane spans lie at 20–40, 50–70, 102–122, 124–144, 149–169, 170–190, 227–249, and 288–308; these read LLAYLALTKPRVIELLLVTAI, AIHPLLMLNTLVGGMMAATGA, NALALGLTLTVISFFWLWCAT, LLAGVLALVTVAFYVFVYTLW, TSQNVVWGGAAGCMPVMIGWS, AITGTIAWPALAMFAIIFFWT, LIYTWLTVAATLVLALATSWLYG, and YLAVVFCALAVDSVIALPTLH.

The protein belongs to the UbiA prenyltransferase family. Protoheme IX farnesyltransferase subfamily.

Its subcellular location is the cell membrane. The catalysed reaction is heme b + (2E,6E)-farnesyl diphosphate + H2O = Fe(II)-heme o + diphosphate. The protein operates within porphyrin-containing compound metabolism; heme O biosynthesis; heme O from protoheme: step 1/1. Its function is as follows. Converts heme B (protoheme IX) to heme O by substitution of the vinyl group on carbon 2 of heme B porphyrin ring with a hydroxyethyl farnesyl side group. The chain is Protoheme IX farnesyltransferase from Mycobacterium bovis (strain BCG / Pasteur 1173P2).